We begin with the raw amino-acid sequence, 239 residues long: Aspartate/glutamate leucyltransferase (239 aa).

It belongs to the R-transferase family. Bpt subfamily.

The protein localises to the cytoplasm. The catalysed reaction is N-terminal L-glutamyl-[protein] + L-leucyl-tRNA(Leu) = N-terminal L-leucyl-L-glutamyl-[protein] + tRNA(Leu) + H(+). It carries out the reaction N-terminal L-aspartyl-[protein] + L-leucyl-tRNA(Leu) = N-terminal L-leucyl-L-aspartyl-[protein] + tRNA(Leu) + H(+). Functionally, functions in the N-end rule pathway of protein degradation where it conjugates Leu from its aminoacyl-tRNA to the N-termini of proteins containing an N-terminal aspartate or glutamate. The protein is Aspartate/glutamate leucyltransferase of Campylobacter jejuni subsp. jejuni serotype O:6 (strain 81116 / NCTC 11828).